Consider the following 456-residue polypeptide: Arginine biosynthesis bifunctional protein ArgJ, mitochondrial (456 aa).

Residues Thr-184, Lys-213, Thr-224, Glu-311, Asn-451, and Thr-456 each contribute to the substrate site. Residue Thr-224 is the Nucleophile of the active site.

The protein belongs to the ArgJ family. In terms of assembly, heterodimer of an alpha and a beta chain. Post-translationally, the alpha and beta chains are autoproteolytically processed from a single precursor protein within the mitochondrion.

Its subcellular location is the mitochondrion matrix. It catalyses the reaction N(2)-acetyl-L-ornithine + L-glutamate = N-acetyl-L-glutamate + L-ornithine. It carries out the reaction L-glutamate + acetyl-CoA = N-acetyl-L-glutamate + CoA + H(+). It participates in amino-acid biosynthesis; L-arginine biosynthesis; L-ornithine and N-acetyl-L-glutamate from L-glutamate and N(2)-acetyl-L-ornithine (cyclic): step 1/1. Its pathway is amino-acid biosynthesis; L-arginine biosynthesis; N(2)-acetyl-L-ornithine from L-glutamate: step 1/4. Catalyzes two activities which are involved in the cyclic version of arginine biosynthesis: the synthesis of acetylglutamate from glutamate and acetyl-CoA, and of ornithine by transacetylation between acetylornithine and glutamate. The sequence is that of Arginine biosynthesis bifunctional protein ArgJ, mitochondrial from Aspergillus niger (strain ATCC MYA-4892 / CBS 513.88 / FGSC A1513).